The sequence spans 80 residues: Exodeoxyribonuclease 7 small subunit (80 aa).

This sequence belongs to the XseB family. In terms of assembly, heterooligomer composed of large and small subunits.

It is found in the cytoplasm. It carries out the reaction Exonucleolytic cleavage in either 5'- to 3'- or 3'- to 5'-direction to yield nucleoside 5'-phosphates.. Bidirectionally degrades single-stranded DNA into large acid-insoluble oligonucleotides, which are then degraded further into small acid-soluble oligonucleotides. The polypeptide is Exodeoxyribonuclease 7 small subunit (Klebsiella pneumoniae (strain 342)).